Consider the following 382-residue polypeptide: Heme A synthase (382 aa).

7 helical membrane-spanning segments follow: residues isoleucine 37–leucine 57, valine 126–alanine 146, leucine 152–serine 172, leucine 188–glutamate 208, serine 231–isoleucine 251, leucine 288–tryptophan 308, and leucine 332–phenylalanine 352. Histidine 293 is a binding site for heme. Heme is bound at residue histidine 353. A helical transmembrane segment spans residues leucine 356–alanine 376.

The protein belongs to the COX15/CtaA family. Type 2 subfamily. Interacts with CtaB. It depends on heme b as a cofactor.

It localises to the cell membrane. The catalysed reaction is Fe(II)-heme o + 2 A + H2O = Fe(II)-heme a + 2 AH2. The protein operates within porphyrin-containing compound metabolism; heme A biosynthesis; heme A from heme O: step 1/1. Catalyzes the conversion of heme O to heme A by two successive hydroxylations of the methyl group at C8. The first hydroxylation forms heme I, the second hydroxylation results in an unstable dihydroxymethyl group, which spontaneously dehydrates, resulting in the formyl group of heme A. The chain is Heme A synthase from Roseobacter denitrificans (strain ATCC 33942 / OCh 114) (Erythrobacter sp. (strain OCh 114)).